The primary structure comprises 466 residues: Histidine--tRNA ligase (466 aa).

Belongs to the class-II aminoacyl-tRNA synthetase family. As to quaternary structure, homodimer.

Its subcellular location is the cytoplasm. It catalyses the reaction tRNA(His) + L-histidine + ATP = L-histidyl-tRNA(His) + AMP + diphosphate + H(+). This is Histidine--tRNA ligase (hisS) from Xylella fastidiosa (strain 9a5c).